The following is a 791-amino-acid chain: MARRAASRAVGALRSDGSIQGRGGRAGGSGAEDARHVFDELLRRGRGASIYGLNRALADVARDSPAAAVSRYNRMARAGADEVTPDLCTYGILIGCCCRAGRLDLGFAALGNVIKKGFRVDAIAFTPLLKGLCADKRTSDAMDIVLRRMTELGCIPNVFSYNILLKGLCDENRSQEALELLHMMADDRGGGSPPDVVSYTTVINGFFKEGDSDKAYSTYHEMLDRGILPDVVTYNSIIAALCKAQAMDKAMEVLNTMVKNGVMPDCMTYNSILHGYCSSGQPKEAIGFLKKMRSDGVEPDVVTYSLLMDYLCKNGRCMEARKIFDSMTKRGLKPEITTYGTLLQGYATKGALVEMHGLLDLMVRNGIHPDHYVFSILICAYAKQGKVDQAMLVFSKMRQQGLNPNAVTYGAVIGILCKSGRVEDAMLYFEQMIDEGLSPGNIVYNSLIHGLCTCNKWERAEELILEMLDRGICLNTIFFNSIIDSHCKEGRVIESEKLFELMVRIGVKPNVITYNTLINGYCLAGKMDEAMKLLSGMVSVGLKPNTVTYSTLINGYCKISRMEDALVLFKEMESSGVSPDIITYNIILQGLFQTRRTAAAKELYVRITESGTQIELSTYNIILHGLCKNKLTDDALQMFQNLCLMDLKLEARTFNIMIDALLKVGRNDEAKDLFVAFSSNGLVPNYWTYRLMAENIIGQGLLEELDQLFLSMEDNGCTVDSGMLNFIVRELLQRGEITRAGTYLSMIDEKHFSLEASTASLFIDLLSGGKYQEYYRFLPEKYKSFIESLSC.

Residues Met-1–Gly-27 constitute a mitochondrion transit peptide. The tract at residues Met-1–Ala-31 is disordered. Gly residues predominate over residues Gln-20–Gly-30. PPR repeat units lie at residues Asp-86–Val-120, Asp-121–Pro-156, Asn-157–Pro-194, Asp-195–Pro-229, Asp-230–Pro-264, Asp-265–Pro-299, Asp-300–Pro-334, Glu-335–Pro-369, Asp-370–Pro-404, Asn-405–Pro-439, Gly-440–Leu-474, Asn-475–Pro-509, Asn-510–Pro-544, Asn-545–Pro-579, Asp-580–Ile-614, Glu-615–Leu-649, Glu-650–Pro-684, Asn-685–Val-719, and Asp-720–Leu-754.

The protein resides in the mitochondrion. Its function is as follows. Reduces the expression of the cytoplasmic male sterility (CMS)-associated mitochondrial gene ORF79, encoding a cytotoxic peptide. Can restore male fertility by blocking ORF79 production via endonucleolytic cleavage of dicistronic ATP6/ORF79 mRNA. Promotes the editing of ATP6 mRNAs independently of its cleavage function. This Oryza sativa subsp. indica (Rice) protein is Protein Rf1, mitochondrial (Rf1).